The following is a 388-amino-acid chain: MKTAYFDCFSGISGDMVLGALLDLGLPLDVLSGELKKIAVSGYVLSAERERRGSIAGTRVRIDIEDQPARSYREIARLIGESALESPVKEKSLAVFEKLALAEARVHQVPPGDVHFHEVGALDSILDIVGAAIGLHHLGIERLCASRVPLGGGFVETRHGLLPLPAPATVLLLEGVPVYDNGIQRELTTPTGAAILAALAESFGPVPDMVVRSTGYGVGTHPCADPPNLLRVLVGEASPGLLRRRLLLIETSIDDMNPEFYGHVMERLFDAGALDVNLVPAQMKKNRPAVILRVLLEPALQAAVTEIVFRETTSLGVRIQEVDRVELPREIGEVDTPYGRCRVKWVRTPWGERRATPEYEDCKRIALEQGVPIRRIYEEVLAAAGRGQ.

It belongs to the LarC family.

This Syntrophobacter fumaroxidans (strain DSM 10017 / MPOB) protein is Putative nickel insertion protein.